A 503-amino-acid chain; its full sequence is Cytochrome P450 3A43 (503 aa).

C442 contributes to the heme binding site.

It belongs to the cytochrome P450 family. Heme serves as cofactor. Highest expression level in prostate. Also expressed in liver, kidney, pancreas, fetal liver and fetal skeletal muscle.

The protein localises to the endoplasmic reticulum membrane. It localises to the microsome membrane. The catalysed reaction is an organic molecule + reduced [NADPH--hemoprotein reductase] + O2 = an alcohol + oxidized [NADPH--hemoprotein reductase] + H2O + H(+). Functionally, exhibits low testosterone 6-beta-hydroxylase activity. The polypeptide is Cytochrome P450 3A43 (CYP3A43) (Homo sapiens (Human)).